A 215-amino-acid polypeptide reads, in one-letter code: NADH-quinone oxidoreductase subunit C (215 aa).

The protein belongs to the complex I 30 kDa subunit family. NDH-1 is composed of 14 different subunits. Subunits NuoB, C, D, E, F, and G constitute the peripheral sector of the complex.

The protein localises to the cell inner membrane. It carries out the reaction a quinone + NADH + 5 H(+)(in) = a quinol + NAD(+) + 4 H(+)(out). NDH-1 shuttles electrons from NADH, via FMN and iron-sulfur (Fe-S) centers, to quinones in the respiratory chain. The immediate electron acceptor for the enzyme in this species is believed to be ubiquinone. Couples the redox reaction to proton translocation (for every two electrons transferred, four hydrogen ions are translocated across the cytoplasmic membrane), and thus conserves the redox energy in a proton gradient. The chain is NADH-quinone oxidoreductase subunit C from Methylobacterium sp. (strain 4-46).